The chain runs to 459 residues: Palmitoyltransferase PFA4 (459 aa).

Residues 1 to 9 (MAARNWSRV) lie on the Cytoplasmic side of the membrane. The chain crosses the membrane as a helical span at residues 10 to 30 (WVGGTVILISFIAFSSQIFVI). The Lumenal segment spans residues 31–37 (WPWYGRE). A helical transmembrane segment spans residues 38–58 (ISLDLLKLLVPLNLAAFMIFW). Residues 59 to 138 (NYRLCVITSP…GNCVGFYNQG (80 aa)) lie on the Cytoplasmic side of the membrane. The region spanning 95–145 (RYCKNCEHYKPPRAHHCRQCKTCWLKLDHHCPWIGNCVGFYNQGHFIRFLL) is the DHHC domain. The S-palmitoyl cysteine intermediate role is filled by Cys-125. Residues 139-159 (HFIRFLLWVDIGTTFHLIIMV) traverse the membrane as a helical segment. Residues 160 to 177 (RRVLYIAEYYHQEPTLAD) are Lumenal-facing. Residues 178-198 (VLFLVFNFATCVPVWLCVGMF) traverse the membrane as a helical segment. The Cytoplasmic portion of the chain corresponds to 199–459 (SIYHVYLACG…DTEEESGYAH (261 aa)). Positions 278 to 379 (HTTQYFWPPQ…DYDHYDEGPM (102 aa)) are disordered. Positions 286 to 299 (PQDPSRLPNPPPIP) are enriched in pro residues. Polar residues predominate over residues 310–322 (NGFNPNLQPTNSL). Basic and acidic residues predominate over residues 331-356 (HIDEDEHSHERDQYRHYSSGEERDND).

The protein belongs to the DHHC palmitoyltransferase family. PFA4 subfamily.

It is found in the endoplasmic reticulum membrane. It catalyses the reaction L-cysteinyl-[protein] + hexadecanoyl-CoA = S-hexadecanoyl-L-cysteinyl-[protein] + CoA. Its function is as follows. Mediates the reversible addition of palmitate to target proteins, thereby regulating their membrane association and biological function. The chain is Palmitoyltransferase PFA4 from Cryptococcus neoformans var. neoformans serotype D (strain B-3501A) (Filobasidiella neoformans).